A 484-amino-acid polypeptide reads, in one-letter code: Malonate-semialdehyde dehydrogenase 1 (484 aa).

Positions 153, 177, 180, 181, 230, and 252 each coordinate NAD(+). Cys-285 (nucleophile) is an active-site residue. Glu-385 contributes to the NAD(+) binding site.

It belongs to the aldehyde dehydrogenase family. IolA subfamily. Homotetramer.

The catalysed reaction is 3-oxopropanoate + NAD(+) + CoA + H2O = hydrogencarbonate + acetyl-CoA + NADH + H(+). The enzyme catalyses 2-methyl-3-oxopropanoate + NAD(+) + CoA + H2O = propanoyl-CoA + hydrogencarbonate + NADH + H(+). Its pathway is polyol metabolism; myo-inositol degradation into acetyl-CoA; acetyl-CoA from myo-inositol: step 7/7. Catalyzes the oxidation of malonate semialdehyde (MSA) and methylmalonate semialdehyde (MMSA) into acetyl-CoA and propanoyl-CoA, respectively. Is involved in a myo-inositol catabolic pathway. Bicarbonate, and not CO2, is the end-product of the enzymatic reaction. This Geobacillus thermodenitrificans (strain NG80-2) protein is Malonate-semialdehyde dehydrogenase 1.